A 136-amino-acid chain; its full sequence is MRKSTMDAEPTSSPPAGQWSIYLVRTAAGLLYTGISTDPIRRLRQHQSGKGSRALRGKGPLVLVWQQTVGNKGAALRLEYRLKQQSKAFKERLVQEPDRWADWSQPWLTVVTPPLEAPQKRPLQAVAKEGSDNREG.

The 76-residue stretch at 17–92 (GQWSIYLVRT…KQQSKAFKER (76 aa)) folds into the GIY-YIG domain.

Belongs to the UPF0213 family.

The sequence is that of UPF0213 protein ASA_0550 from Aeromonas salmonicida (strain A449).